The chain runs to 417 residues: Tryptophan synthase beta chain (417 aa).

N6-(pyridoxal phosphate)lysine is present on Lys111.

The protein belongs to the TrpB family. As to quaternary structure, tetramer of two alpha and two beta chains. Pyridoxal 5'-phosphate is required as a cofactor.

It carries out the reaction (1S,2R)-1-C-(indol-3-yl)glycerol 3-phosphate + L-serine = D-glyceraldehyde 3-phosphate + L-tryptophan + H2O. The protein operates within amino-acid biosynthesis; L-tryptophan biosynthesis; L-tryptophan from chorismate: step 5/5. Functionally, the beta subunit is responsible for the synthesis of L-tryptophan from indole and L-serine. This chain is Tryptophan synthase beta chain, found in Fervidobacterium nodosum (strain ATCC 35602 / DSM 5306 / Rt17-B1).